A 122-amino-acid chain; its full sequence is Small ribosomal subunit protein uS13 (122 aa).

Positions 92–122 (HRRGLPVRGQRTHTNARTRKGPAKPIAGKKK) are disordered.

Belongs to the universal ribosomal protein uS13 family. In terms of assembly, part of the 30S ribosomal subunit. Forms a loose heterodimer with protein S19. Forms two bridges to the 50S subunit in the 70S ribosome.

Its function is as follows. Located at the top of the head of the 30S subunit, it contacts several helices of the 16S rRNA. In the 70S ribosome it contacts the 23S rRNA (bridge B1a) and protein L5 of the 50S subunit (bridge B1b), connecting the 2 subunits; these bridges are implicated in subunit movement. Contacts the tRNAs in the A and P-sites. In Paracoccus denitrificans (strain Pd 1222), this protein is Small ribosomal subunit protein uS13.